We begin with the raw amino-acid sequence, 147 residues long: Biogenesis of lysosome-related organelles complex 1 subunit 1 (147 aa).

Disordered stretches follow at residues 1 to 25 and 125 to 147; these read MLTS…VRRK and SSGA…PSAT.

It belongs to the BLOC1S1 family. As to quaternary structure, component of the biogenesis of lysosome-related organelles complex-1 (BLOC-1) composed of Blos1, Blos2, Blos3, Blos4, Dysb, Muted, Pldn and Snapin. Interacts with Pldn.

Functionally, component of the biogenesis of lysosome-related organelles complex-1 (BLOC-1) involved in pigment granule biogenesis and membrane trafficking in synapses. In response to high synaptic activity at neuromuscular junctions, stabilizes Pldn protein levels and, together with Pldn, plays a role in promoting efficient synaptic vesicle recycling and re-formation through early endosomes. This is Biogenesis of lysosome-related organelles complex 1 subunit 1 from Drosophila melanogaster (Fruit fly).